The following is an 803-amino-acid chain: MALASQLSVTDDSAYGFITTNAEIVSKKRKLAQNDDRFEVVMSVYSPKADSMDVGVSVLKLKTLELTLMSFCDSSTFVRTVNQIQVYEPTSIILPEAQSHSQIEKLKYIIHSNISDKVRERFMKAKVFNAFDGMNSLKLYTDINESTLGQVISNRKLSLAAANACIDYCVSTKMFRVTNKIRLKYCMCENTMLIDTCTVRDLELVDSLSETGTTLYSFLNCCLTKMGMRILRTSILQPSTHENSIILRSESLQELINDEDALISIRSSLKHTCDLEKVFSTFLEPRGLLSQEQEINNIILLKTVLQNTFVIRKSIQNVSSHLLVQVKQILEHENVQHLLAIINEYIRNDCQWANNSTELANQRANAVKSGVNGLLDVSRRIRETLLEEVSELVAKLSEELEIFMEYRFEISRGFFIKIKGNNTDINSLPEVLINRVKKRKTIECTTIELMKQSSRYNDIVSEITTLNSTIIHDMYTSINSYTPILLMVSEAIGTLDLLCSFAYFTSLQKDSYTCPEFAKEVTIMRSLHPILGGNNSNFVANNYSCNHELSRIHVITGANMSGKSVYLRQIAYLVIMAQMGCFVPAEYARMRIFNSLYSRISSDNVDINASSFSKEMSETAVILNDSDGDSLILIDELGRGSSLTDGFSICLAILEDLICKEATVITTTHFRDIAQVLANKSCVVTAHMQTVETNGQLEMKYNLVLGRNDIVGYGIRFAEVSNLLPQELIEDSKVVANILRSRKPVHGDKELKLLSRRRKLVLELYFALNYISKLNCDMNYKMQLLQTLQSKFVEEINITPNTE.

557-564 is a binding site for ATP; the sequence is GANMSGKS.

This sequence belongs to the DNA mismatch repair MutS family. In terms of assembly, heterooligomer of MSH4 and MSH5.

In terms of biological role, involved in meiotic recombination. Facilitate crossovers between homologs during meiosis. The protein is MutS protein homolog 4 (MSH4) of Candida albicans (Yeast).